A 1367-amino-acid polypeptide reads, in one-letter code: Probable serine/threonine-protein kinase pkgA (1367 aa).

Disordered stretches follow at residues 140-164, 264-429, 456-556, and 771-792; these read IDEN…NKTI, KNGK…LLSR, PTPL…SRKP, and PREE…SDPV. The segment covering 143 to 162 has biased composition (low complexity); sequence NNNNNNNNNNNNNNNNNKNK. Over residues 271–282 the composition is skewed to pro residues; the sequence is IKRPSPPLPPPQ. The segment covering 287 to 326 has biased composition (basic and acidic residues); it reads EQQKEQKEQQKEQQKEQQKEQQKEQEQKQQEPQKYVKFEI. Residues 340-381 are compositionally biased toward low complexity; it reads ISSSNISNEISKQQQQQQQQQQQQQQQQQQQQQQQQQQQQQQ. Residues 399–421 are compositionally biased toward polar residues; sequence ANNNILTTPLSSQPTQSLETPST. Residues 506-517 are compositionally biased toward acidic residues; sequence GEDEEEDEDDDN. A compositionally biased stretch (basic residues) spans 531-544; that stretch reads LKNKRPFKKTHVHH. The Protein kinase domain maps to 810-1236; sequence FEFIKPITKG…AEEIKSHPFF (427 aa). ATP contacts are provided by residues 816-824 and lysine 839; that span reads ITKGGYGKV. Aspartate 933 functions as the Proton acceptor in the catalytic mechanism. 3 disordered regions span residues 971 to 1034, 1084 to 1134, and 1288 to 1312; these read FSPT…PSNT, FIPP…HNIH, and QNQN…TATA. The segment covering 979-1015 has biased composition (low complexity); sequence NNQSSSSSSVSNIGGSNTIGSNISSTNNNNNNNNTTG. Polar residues predominate over residues 1025–1034; it reads NTETPIPSNT. Composition is skewed to low complexity over residues 1092-1125 and 1294-1312; these read QQPI…QQTT and SSTI…TATA. An AGC-kinase C-terminal domain is found at 1237–1347; it reads KSINWKTILT…VNFQSLLELN (111 aa).

It belongs to the protein kinase superfamily. AGC Ser/Thr protein kinase family.

It catalyses the reaction L-seryl-[protein] + ATP = O-phospho-L-seryl-[protein] + ADP + H(+). It carries out the reaction L-threonyl-[protein] + ATP = O-phospho-L-threonyl-[protein] + ADP + H(+). This Dictyostelium discoideum (Social amoeba) protein is Probable serine/threonine-protein kinase pkgA (pkgA).